Consider the following 44-residue polypeptide: Antimicrobial peptide 1b (44 aa).

The 42-residue stretch at 1 to 42 (AQKCGEQGRGAKCPNCLCCGRYGFCGSTPDYCGVGCQSQCRG) folds into the Chitin-binding type-1 domain. Cystine bridges form between Cys-4-Cys-19, Cys-13-Cys-25, Cys-16-Cys-43, Cys-18-Cys-32, and Cys-36-Cys-40.

Contains 5 disulfide bonds.

Functionally, binds chitin. Has antifungal activity against F.oxysporum 16/10 (IC(50)=4.1 uM) and B.sorokiniana 6/10 (IC(50)=2.7 uM). Inhibits germination of fungal spores. The sequence is that of Antimicrobial peptide 1b from Leymus arenarius (Lyme grass).